Here is a 1199-residue protein sequence, read N- to C-terminus: Metabotropic glutamate receptor 1 (1199 aa).

A signal peptide spans 1-18 (MVRLLLIFFPMIFLEMSI). At 19–592 (LPRMPDRKVL…VRYLEWSDIE (574 aa)) the chain is on the extracellular side. A disulfide bridge links cysteine 67 with cysteine 109. Tyrosine 74 contributes to the L-glutamate binding site. Asparagine 98 is a glycosylation site (N-linked (GlcNAc...) asparagine). Residues serine 165 and 186-188 (SAT) each bind L-glutamate. Residue asparagine 223 is glycosylated (N-linked (GlcNAc...) asparagine). Tyrosine 236 serves as a coordination point for L-glutamate. Residues cysteine 289 and cysteine 291 are joined by a disulfide bond. L-glutamate is bound at residue aspartate 318. Cysteine 378 and cysteine 394 are disulfide-bonded. Asparagine 397 carries an N-linked (GlcNAc...) asparagine glycan. Position 409 (lysine 409) interacts with L-glutamate. An intrachain disulfide couples cysteine 432 to cysteine 439. Asparagine 515 carries an N-linked (GlcNAc...) asparagine glycan. A helical transmembrane segment spans residues 593 to 615 (SIIAIAFSCLGILVTLFVTLIFV). Over 616–629 (LYRDTPVVKSSSRE) the chain is Cytoplasmic. A helical transmembrane segment spans residues 630–650 (LCYIILAGIFLGYVCPFTLIA). The Extracellular segment spans residues 651-658 (KPTTTSCY). A disulfide bond links cysteine 657 and cysteine 746. A helical transmembrane segment spans residues 659–680 (LQRLLVGLSSAMCYSALVTKTN). The Cytoplasmic portion of the chain corresponds to 681–703 (RIARILAGSKKKICTRKPRFMSA). A helical membrane pass occupies residues 704–727 (WAQVIIASILISVQLTLVVTLIIM). The Extracellular segment spans residues 728 to 750 (EPPMPILSYPSIKEVYLICNTSN). A helical membrane pass occupies residues 751-772 (LGVVAPVGYNGLLIMSCTYYAF). The Cytoplasmic segment spans residues 773–785 (KTRNVPANFNEAK). Residues 786–807 (YIAFTMYTTCIIWLAFVPIYFG) form a helical membrane-spanning segment. Over 808 to 815 (SNYKIITT) the chain is Extracellular. The helical transmembrane segment at 816 to 840 (CFAVSLSVTVALGCMFTPKMYIIIA) threads the bilayer. Residues 841-1199 (KPERNVRSAF…RDYKQSSSTL (359 aa)) lie on the Cytoplasmic side of the membrane. Serine 853 bears the Phosphoserine mark. At threonine 871 the chain carries Phosphothreonine. Disordered stretches follow at residues 882 to 905 (GAGN…QAPK), 959 to 1036 (EEDN…QPKS), and 1056 to 1081 (HAVL…PPQH). Residues 885 to 895 (NANSNGKSVSW) show a composition bias toward polar residues. Serine 894 and serine 969 each carry phosphoserine. A compositionally biased stretch (pro residues) spans 1012-1033 (GLPPPLPQQQPQQPPPQQPPQQ). Serine 1098 is modified (phosphoserine). Residues 1120–1177 (EREGNTEEDELEEEEDLPTASKLTPEDSPALTPPSPFRDSVASGSSVPSSPVSESVLC) form a disordered region. Residues 1125-1136 (TEEDELEEEEDL) are compositionally biased toward acidic residues. The residue at position 1147 (serine 1147) is a Phosphoserine. Threonine 1151 carries the post-translational modification Phosphothreonine. Serine 1154 carries the post-translational modification Phosphoserine. Positions 1159–1175 (SVASGSSVPSSPVSESV) are enriched in low complexity.

This sequence belongs to the G-protein coupled receptor 3 family. Homodimer; disulfide-linked. The PPXXF motif binds HOMER1, HOMER2 and HOMER3. Interacts with TAMALIN. Interacts with RYR1, RYR2, ITPR1, SHANK1 and SHANK3. Interacts with SIAH1. In terms of tissue distribution, predominantly expressed in cerebellar Purkinje cells, CA2-CA3 pyramidal cells of the hippocampus, and mitral and tufted cells of the olfactory bulb.

The protein localises to the cell membrane. It localises to the postsynaptic cell membrane. The protein resides in the cell projection. Its subcellular location is the dendrite. Its function is as follows. G-protein coupled receptor for glutamate. Ligand binding causes a conformation change that triggers signaling via guanine nucleotide-binding proteins (G proteins) and modulates the activity of down-stream effectors. Signaling activates a phosphatidylinositol-calcium second messenger system. May participate in the central action of glutamate in the CNS, such as long-term potentiation in the hippocampus and long-term depression in the cerebellum. May function in the light response in the retina. Induces GRID1 and GRID2 cation-channel activation via GNAQ-PLC-PKC pathway in dopaminergic neurons and cerebellar Purkinje cell, respectively. The chain is Metabotropic glutamate receptor 1 (Grm1) from Rattus norvegicus (Rat).